We begin with the raw amino-acid sequence, 156 residues long: ATP synthase subunit b (156 aa).

A helical transmembrane segment spans residues isoleucine 5–proline 27.

Belongs to the ATPase B chain family. In terms of assembly, F-type ATPases have 2 components, F(1) - the catalytic core - and F(0) - the membrane proton channel. F(1) has five subunits: alpha(3), beta(3), gamma(1), delta(1), epsilon(1). F(0) has three main subunits: a(1), b(2) and c(10-14). The alpha and beta chains form an alternating ring which encloses part of the gamma chain. F(1) is attached to F(0) by a central stalk formed by the gamma and epsilon chains, while a peripheral stalk is formed by the delta and b chains.

The protein resides in the cell inner membrane. In terms of biological role, f(1)F(0) ATP synthase produces ATP from ADP in the presence of a proton or sodium gradient. F-type ATPases consist of two structural domains, F(1) containing the extramembraneous catalytic core and F(0) containing the membrane proton channel, linked together by a central stalk and a peripheral stalk. During catalysis, ATP synthesis in the catalytic domain of F(1) is coupled via a rotary mechanism of the central stalk subunits to proton translocation. Functionally, component of the F(0) channel, it forms part of the peripheral stalk, linking F(1) to F(0). The protein is ATP synthase subunit b of Francisella philomiragia subsp. philomiragia (strain ATCC 25017 / CCUG 19701 / FSC 153 / O#319-036).